A 249-amino-acid chain; its full sequence is Probable transcriptional regulatory protein IL1088 (249 aa).

The protein belongs to the TACO1 family.

It localises to the cytoplasm. This is Probable transcriptional regulatory protein IL1088 from Idiomarina loihiensis (strain ATCC BAA-735 / DSM 15497 / L2-TR).